The sequence spans 470 residues: Serine carboxypeptidase ctsa-4.1 (470 aa).

An N-terminal signal peptide occupies residues 1–19; the sequence is MKLLSILFIFVSSYSFCLA. A glycan (N-linked (GlcNAc...) asparagine) is linked at Asn132. Ser169 is an active-site residue. Asn316 carries an N-linked (GlcNAc...) asparagine glycan. The active site involves Asp380. The N-linked (GlcNAc...) asparagine glycan is linked to Asn396. The active site involves His441.

Belongs to the peptidase S10 family.

It carries out the reaction Release of a C-terminal amino acid with broad specificity.. This chain is Serine carboxypeptidase ctsa-4.1, found in Caenorhabditis elegans.